We begin with the raw amino-acid sequence, 111 residues long: Beta-microseminoprotein (111 aa).

An N-terminal signal peptide occupies residues 1-20 (MKFLLGTLVVLATFVTLCNS). Glutamine 21 carries the post-translational modification Pyrrolidone carboxylic acid. Disulfide bonds link cysteine 22/cysteine 67, cysteine 35/cysteine 59, cysteine 54/cysteine 90, cysteine 57/cysteine 66, and cysteine 81/cysteine 104.

It belongs to the beta-microseminoprotein family. As to quaternary structure, homodimer; Interacts with PI16. Corpora lutea, mostly in the luteal cells surrounding blood vessels.

Its subcellular location is the secreted. The sequence is that of Beta-microseminoprotein (MSMB) from Sus scrofa (Pig).